Here is a 359-residue protein sequence, read N- to C-terminus: MKKYNFNPGPSILPQETVNNTARAITNFSNSGLSLMEISHRSKDFQLMINETIVLFKELLSIPEGYSVLFLGGGASLQFCMVPYNLLETKAAYLNSGAWASKAIKEARLFGEIIEVASSREANFSYIPKNYIVPSDSDYFHITTNNTIFGTEIHHDIESSVPLVADMSSDIFSRPINISKYGLIYGGAQKNLGPAGVTFVIVKDSLLGNVSRPIPSMLDYRIHIKNESMFNTPPVVPIYASLQTLKWLKTLGGVEEVYKKNKEKATFLYEEIDRNRLFKGIAATEDRSLMNVCFIMNDEYKNLESAFQQFASSKGMVGIKGHRSVGGFRASIYNALPKESIKALVSVMREFEKIHCKGI.

Residue Arg-41 coordinates L-glutamate. Residues 75–76, Trp-99, Thr-147, Asp-166, and Gln-189 contribute to the pyridoxal 5'-phosphate site; that span reads AS. Lys-190 is subject to N6-(pyridoxal phosphate)lysine. 231–232 is a pyridoxal 5'-phosphate binding site; the sequence is NT.

It belongs to the class-V pyridoxal-phosphate-dependent aminotransferase family. SerC subfamily. As to quaternary structure, homodimer. Pyridoxal 5'-phosphate is required as a cofactor.

Its subcellular location is the cytoplasm. It carries out the reaction O-phospho-L-serine + 2-oxoglutarate = 3-phosphooxypyruvate + L-glutamate. The catalysed reaction is 4-(phosphooxy)-L-threonine + 2-oxoglutarate = (R)-3-hydroxy-2-oxo-4-phosphooxybutanoate + L-glutamate. It participates in amino-acid biosynthesis; L-serine biosynthesis; L-serine from 3-phospho-D-glycerate: step 2/3. Its pathway is cofactor biosynthesis; pyridoxine 5'-phosphate biosynthesis; pyridoxine 5'-phosphate from D-erythrose 4-phosphate: step 3/5. In terms of biological role, catalyzes the reversible conversion of 3-phosphohydroxypyruvate to phosphoserine and of 3-hydroxy-2-oxo-4-phosphonooxybutanoate to phosphohydroxythreonine. In Azobacteroides pseudotrichonymphae genomovar. CFP2, this protein is Phosphoserine aminotransferase.